Here is a 269-residue protein sequence, read N- to C-terminus: Histone doublet H2B-H2A (269 aa).

The segment at 1–168 (MATQKETTRK…LAGNAARDSK (168 aa)) is histone fold. Residues 210–249 (RKKARKTTEKEASSPKKKAAPKKKKAASKQKKSLSDKELA) are disordered. The segment covering 224 to 241 (PKKKAAPKKKKAASKQKK) has biased composition (basic residues).

Its subcellular location is the host nucleus. It is found in the host cytoplasm. It localises to the virion. Histone-like protein that is recruited to viral factories during viral replication and participates in viral DNA packaging and virion production probably by forming unstable nucleosome-like particles. May compact the viral DNA. The chain is Histone doublet H2B-H2A from Melbournevirus (MelV).